Here is a 365-residue protein sequence, read N- to C-terminus: UDP-N-acetylglucosamine--N-acetylmuramyl-(pentapeptide) pyrophosphoryl-undecaprenol N-acetylglucosamine transferase (365 aa).

UDP-N-acetyl-alpha-D-glucosamine contacts are provided by residues 10 to 12, asparagine 124, arginine 161, serine 195, isoleucine 248, and glutamine 292; that span reads TAG.

Belongs to the glycosyltransferase 28 family. MurG subfamily.

Its subcellular location is the cell membrane. The catalysed reaction is di-trans,octa-cis-undecaprenyl diphospho-N-acetyl-alpha-D-muramoyl-L-alanyl-D-glutamyl-meso-2,6-diaminopimeloyl-D-alanyl-D-alanine + UDP-N-acetyl-alpha-D-glucosamine = di-trans,octa-cis-undecaprenyl diphospho-[N-acetyl-alpha-D-glucosaminyl-(1-&gt;4)]-N-acetyl-alpha-D-muramoyl-L-alanyl-D-glutamyl-meso-2,6-diaminopimeloyl-D-alanyl-D-alanine + UDP + H(+). Its pathway is cell wall biogenesis; peptidoglycan biosynthesis. Its function is as follows. Cell wall formation. Catalyzes the transfer of a GlcNAc subunit on undecaprenyl-pyrophosphoryl-MurNAc-pentapeptide (lipid intermediate I) to form undecaprenyl-pyrophosphoryl-MurNAc-(pentapeptide)GlcNAc (lipid intermediate II). In Nocardioides sp. (strain ATCC BAA-499 / JS614), this protein is UDP-N-acetylglucosamine--N-acetylmuramyl-(pentapeptide) pyrophosphoryl-undecaprenol N-acetylglucosamine transferase.